The primary structure comprises 229 residues: uncharacterized protein (229 aa).

Residues 24 to 78 (LRKWRSIFNASQSDLARKLGISPSVISDYESGRRKPGTAFLKKFVCALIELDGER) form the HTH cro/C1-type domain. The H-T-H motif DNA-binding region spans 35–54 (QSDLARKLGISPSVISDYES).

This is an uncharacterized protein from Archaeoglobus fulgidus (strain ATCC 49558 / DSM 4304 / JCM 9628 / NBRC 100126 / VC-16).